A 62-amino-acid polypeptide reads, in one-letter code: MARKCYVTGKSPKSGNNRSHALNKTKRTWGINVQKVRILVDGKPKKVWVSARALKSGKVERV.

The disordered stretch occupies residues 1-26 (MARKCYVTGKSPKSGNNRSHALNKTK). Polar residues predominate over residues 11 to 20 (SPKSGNNRSH).

Belongs to the bacterial ribosomal protein bL28 family.

The protein is Large ribosomal subunit protein bL28 of Exiguobacterium sibiricum (strain DSM 17290 / CCUG 55495 / CIP 109462 / JCM 13490 / 255-15).